A 488-amino-acid chain; its full sequence is Thiamine transporter 2 (488 aa).

The Cytoplasmic portion of the chain corresponds to 1 to 8 (MDSSCRTP). Residues 9 to 29 (PSNSWVYPTVILCLFGFFSMF) form a helical membrane-spanning segment. At 30-54 (RPSEAFLIPFLSEPSKNLTSPEMTN) the chain is on the extracellular side. N-linked (GlcNAc...) asparagine glycosylation is present at Asn46. The chain crosses the membrane as a helical span at residues 55–75 (EILPVWTYSYLATLPPVFVLT). The Cytoplasmic segment spans residues 76-82 (DYLRYKP). The chain crosses the membrane as a helical span at residues 83–103 (VIMLHVVAFATSYLFLLFGQG). The Extracellular portion of the chain corresponds to 104–111 (VMLMQTAE). The chain crosses the membrane as a helical span at residues 112–132 (FFFGVVSATEIAYFAYIYSMV). Over 133–145 (SPEHYQKVSSYCR) the chain is Cytoplasmic. The helical transmembrane segment at 146–166 (SITLVAYTAGSVLAQLLVSLT) threads the bilayer. The Extracellular segment spans residues 167-172 (NLPYSS). Residues 173–193 (LFYISLACVSVAFFFSLFLPM) traverse the membrane as a helical segment. Over 194–276 (PKKSMFFHAK…YSSKHLVYWS (83 aa)) the chain is Cytoplasmic. A helical transmembrane segment spans residues 277–297 (LWWAFATAGYNQILNYVQVLW). Residues 298–310 (EHKAPSQDSSIYN) lie on the Extracellular side of the membrane. A helical transmembrane segment spans residues 311-331 (GAVEAIATFGGALASFSVGYL). The Cytoplasmic segment spans residues 332-335 (KVNW). The helical transmembrane segment at 336 to 356 (DLLGELGLAVFSAVIAGSLFL) threads the bilayer. The Extracellular portion of the chain corresponds to 357 to 369 (MNYSRSIWVCYAG). Asn358 carries N-linked (GlcNAc...) asparagine glycosylation. The chain crosses the membrane as a helical span at residues 370–390 (YLLVKSSYSFLITIAVFQIAV). Topologically, residues 391 to 399 (NLSLERYAL) are cytoplasmic. The helical transmembrane segment at 400 to 420 (VFGIDTFIALVIQTIMTMIVV) threads the bilayer. Residues 421-428 (DQRGLQLP) are Extracellular-facing. The chain crosses the membrane as a helical span at residues 429–449 (VTTQFLVYGSYFAVIAGVFLM). At 450 to 488 (RSIYILCSAKCRKEVQNLATTRSPNEPHPQEPSNVSTKF) the chain is on the cytoplasmic side. Residues 469 to 488 (TTRSPNEPHPQEPSNVSTKF) form a disordered region.

It belongs to the reduced folate carrier (RFC) transporter (TC 2.A.48) family. In terms of tissue distribution, high expression in kidney, brain, lung and small intestine. Detected in pancreatic acinar cells (at protein level). Also expressed strongly in pancreatic islet cells.

The protein resides in the membrane. The catalysed reaction is thiamine(out) + H(+)(in) = thiamine(in) + H(+)(out). In terms of biological role, high-affinity transporter for the intake of thiamine. Unlike the human ortholog, lacks H(+)-dependent pyridoxine transport activity due to an absence of seven critical amino-acids required for pyridoxine transport. The polypeptide is Thiamine transporter 2 (Slc19a3) (Mus musculus (Mouse)).